A 443-amino-acid chain; its full sequence is Pyrrolysine--tRNA ligase (443 aa).

Residues Val103–Pro177 are disordered. The segment covering Pro131–Pro177 has biased composition (low complexity).

The protein belongs to the class-II aminoacyl-tRNA synthetase family.

The protein resides in the cytoplasm. The enzyme catalyses tRNA(Pyl) + L-pyrrolysine + ATP = L-pyrrolysyl-tRNA(Pyl) + AMP + diphosphate. Functionally, catalyzes the attachment of pyrrolysine to tRNA(Pyl). Pyrrolysine is a lysine derivative encoded by the termination codon UAG. The chain is Pyrrolysine--tRNA ligase from Methanosarcina acetivorans (strain ATCC 35395 / DSM 2834 / JCM 12185 / C2A).